We begin with the raw amino-acid sequence, 145 residues long: Ribosome maturation factor RimP (145 aa).

This sequence belongs to the RimP family.

The protein localises to the cytoplasm. Required for maturation of 30S ribosomal subunits. The protein is Ribosome maturation factor RimP of Borreliella afzelii (strain PKo) (Borrelia afzelii).